Reading from the N-terminus, the 497-residue chain is Glycogen synthase (497 aa).

Lysine 15 contributes to the ADP-alpha-D-glucose binding site.

The protein belongs to the glycosyltransferase 1 family. Bacterial/plant glycogen synthase subfamily.

The catalysed reaction is [(1-&gt;4)-alpha-D-glucosyl](n) + ADP-alpha-D-glucose = [(1-&gt;4)-alpha-D-glucosyl](n+1) + ADP + H(+). It participates in glycan biosynthesis; glycogen biosynthesis. Functionally, synthesizes alpha-1,4-glucan chains using ADP-glucose. The polypeptide is Glycogen synthase (Thermodesulfovibrio yellowstonii (strain ATCC 51303 / DSM 11347 / YP87)).